We begin with the raw amino-acid sequence, 394 residues long: MDGPAQQTDTVMAEAAAAQQPAPPSQPVAGIDNIPATLSHGGRFIQYNIFGNVFEVTAKYKPPIMPIGKGAYGIVCSALNSETNEHVATKKIANAFDNKIDAKRTLREIKLLRHMDHENIVAIRDIIPPPQREAFNDVYIAYELMDTDLHQIIRSNQGLSEEHCQYFLYQILRGLKYIHSANVLHRDLKPRNLLLNANCDLKICDFGLARVTSETDFMTEYVVTRWYRPPELLLNSSDYTAAIDVWSVGCIFMELMDRKPLFPGRDHVQQLRLLMELIGTPSEAEMEFLNENAKRYIRQLPLYRRQSFVEKFPHVNPAAIDLVEKMLTFDPRRRLTVEDALAHPYLTSLHDISDEPVCTTPFSFDFEQHALTEEQMKELIYREGLAFNPEYQHM.

Polar residues predominate over residues 1–10 (MDGPAQQTDT). The interval 1–27 (MDGPAQQTDTVMAEAAAAQQPAPPSQP) is disordered. The region spanning 61–346 (KPPIMPIGKG…VEDALAHPYL (286 aa)) is the Protein kinase domain. ATP is bound by residues 67 to 75 (IGKGAYGIV) and K90. D187 (proton acceptor) is an active-site residue. A Phosphothreonine modification is found at T219. The short motif at 219 to 221 (TEY) is the TXY element. Position 221 is a phosphotyrosine (Y221). The residue at position 224 (T224) is a Phosphothreonine.

This sequence belongs to the protein kinase superfamily. CMGC Ser/Thr protein kinase family. MAP kinase subfamily. Mg(2+) serves as cofactor. Activated by cold, wounding and UV-C in a cultivar-dependent manner; phosphorylated at Tyr-221 in cv. Subicho but not in cv. Pungchon. As to expression, expressed constitutively in roots, stems, flowers and fruits of the hot pepper (cv. Subicho).

The enzyme catalyses L-seryl-[protein] + ATP = O-phospho-L-seryl-[protein] + ADP + H(+). It catalyses the reaction L-threonyl-[protein] + ATP = O-phospho-L-threonyl-[protein] + ADP + H(+). With respect to regulation, activated by threonine and tyrosine phosphorylation. In terms of biological role, protein kinase involved in oxidative stress-mediated and innate immune MAP kinase signaling cascades. This is Mitogen-activated protein kinase 2 from Capsicum annuum (Capsicum pepper).